Here is a 601-residue protein sequence, read N- to C-terminus: Oligoendopeptidase F, plasmid (601 aa).

Position 387 (His-387) interacts with Zn(2+). Residue Glu-388 is part of the active site. His-391 and His-394 together coordinate Zn(2+).

This sequence belongs to the peptidase M3B family. The cofactor is Zn(2+).

Its function is as follows. Hydrolyzes peptides containing between 7 and 17 amino acids with a rather wide specificity. The sequence is that of Oligoendopeptidase F, plasmid (pepF1) from Lactococcus lactis subsp. cremoris (Streptococcus cremoris).